We begin with the raw amino-acid sequence, 355 residues long: Anthranilate phosphoribosyltransferase (355 aa).

5-phospho-alpha-D-ribose 1-diphosphate is bound by residues glycine 102, 105-106 (GD), serine 110, 112-115 (NIST), 130-138 (KHGNRSVSS), and serine 142. Glycine 102 serves as a coordination point for anthranilate. Serine 114 lines the Mg(2+) pocket. Asparagine 133 is a binding site for anthranilate. Arginine 188 is a binding site for anthranilate. Positions 246 and 247 each coordinate Mg(2+).

Belongs to the anthranilate phosphoribosyltransferase family. As to quaternary structure, homodimer. The cofactor is Mg(2+).

The enzyme catalyses N-(5-phospho-beta-D-ribosyl)anthranilate + diphosphate = 5-phospho-alpha-D-ribose 1-diphosphate + anthranilate. The protein operates within amino-acid biosynthesis; L-tryptophan biosynthesis; L-tryptophan from chorismate: step 2/5. Its function is as follows. Catalyzes the transfer of the phosphoribosyl group of 5-phosphorylribose-1-pyrophosphate (PRPP) to anthranilate to yield N-(5'-phosphoribosyl)-anthranilate (PRA). The chain is Anthranilate phosphoribosyltransferase from Pectobacterium carotovorum subsp. carotovorum (strain PC1).